Reading from the N-terminus, the 287-residue chain is ADP-dependent (S)-NAD(P)H-hydrate dehydratase (287 aa).

The region spanning glycine 7 to phenylalanine 283 is the YjeF C-terminal domain. (6S)-NADPHX contacts are provided by alanine 42 and histidine 159. AMP contacts are provided by residues lysine 196–aspartate 200 and glycine 224. Aspartate 225 is a (6S)-NADPHX binding site.

It belongs to the NnrD/CARKD family. As to quaternary structure, homotetramer. Mg(2+) serves as cofactor.

It carries out the reaction (6S)-NADHX + ADP = AMP + phosphate + NADH + H(+). The enzyme catalyses (6S)-NADPHX + ADP = AMP + phosphate + NADPH + H(+). Its function is as follows. Catalyzes the dehydration of the S-form of NAD(P)HX at the expense of ADP, which is converted to AMP. Together with NAD(P)HX epimerase, which catalyzes the epimerization of the S- and R-forms, the enzyme allows the repair of both epimers of NAD(P)HX, a damaged form of NAD(P)H that is a result of enzymatic or heat-dependent hydration. The chain is ADP-dependent (S)-NAD(P)H-hydrate dehydratase from Cenarchaeum symbiosum (strain A).